We begin with the raw amino-acid sequence, 414 residues long: Esterase FrsA (414 aa).

It belongs to the FrsA family.

The catalysed reaction is a carboxylic ester + H2O = an alcohol + a carboxylate + H(+). Functionally, catalyzes the hydrolysis of esters. This Escherichia fergusonii (strain ATCC 35469 / DSM 13698 / CCUG 18766 / IAM 14443 / JCM 21226 / LMG 7866 / NBRC 102419 / NCTC 12128 / CDC 0568-73) protein is Esterase FrsA.